A 238-amino-acid chain; its full sequence is Ribitol-5-phosphate cytidylyltransferase (238 aa).

CTP-binding positions include 7–10 (LAGG) and 81–87 (GSDRNET).

The protein belongs to the IspD/TarI cytidylyltransferase family. TarI subfamily.

The enzyme catalyses D-ribitol 5-phosphate + CTP + H(+) = CDP-L-ribitol + diphosphate. It participates in cell wall biogenesis; poly(ribitol phosphate) teichoic acid biosynthesis. Catalyzes the transfer of the cytidylyl group of CTP to D-ribitol 5-phosphate. This chain is Ribitol-5-phosphate cytidylyltransferase, found in Staphylococcus saprophyticus subsp. saprophyticus (strain ATCC 15305 / DSM 20229 / NCIMB 8711 / NCTC 7292 / S-41).